Consider the following 920-residue polypeptide: Alpha-L-rhamnosidase (920 aa).

Positions 1 to 19 (MCVVRTFWFAVLTVIFAVS) are cleaved as a signal peptide. Cysteine 20 carries the N-palmitoyl cysteine lipid modification. Cysteine 20 is lipidated: S-diacylglycerol cysteine. Residues aspartate 500, 504-506 (RDE), aspartate 513, and tryptophan 565 each bind alpha-L-rhamnose. Glutamate 506 acts as the Proton donor in catalysis. The Proton acceptor role is filled by glutamate 779. Residue histidine 800 coordinates alpha-L-rhamnose.

This sequence belongs to the glycosyl hydrolase 78 family.

The protein localises to the cell membrane. It catalyses the reaction Hydrolysis of terminal non-reducing alpha-L-rhamnose residues in alpha-L-rhamnosides.. Functionally, alpha-L-rhamnosidase involved in ulvan degradation. Ulvan is the main polysaccharide component of the Ulvales (green seaweed) cell wall. It is composed of disaccharide building blocks comprising 3-sulfated rhamnose (Rha3S) linked to D-glucuronic acid (GlcA), L-iduronic acid (IduA), or D-xylose (Xyl). The enzyme is able to degrade p-nitrophenyl-alpha-L-rhamnopyranoside (PNP-Rha) in vitro. Incubating the enzyme with the products obtained after degradation with ulvan lyase and beta-glucuronyl hydrolase (i.e. the trisaccharides beta-alpha-L-Rha3S-IduA-Rha3S and beta-alpha-L-Rha3S-GlcA-Rha3S) showed no degradation, suggesting that the enzyme is active on neutral rhamnose and that desulfation of the oligosaccharide must be achieved before cleavage of rhamnose. The protein is Alpha-L-rhamnosidase of Alteromonas sp. (strain LOR).